The primary structure comprises 381 residues: 3-dehydroquinate synthase (381 aa).

NAD(+) is bound by residues 81–86, 115–119, 139–140, K152, and K161; these read EGEVSK, GVVGD, and TS. 3 residues coordinate Zn(2+): E194, H256, and H274.

It belongs to the sugar phosphate cyclases superfamily. Dehydroquinate synthase family. Co(2+) is required as a cofactor. Zn(2+) serves as cofactor. The cofactor is NAD(+).

It localises to the cytoplasm. The enzyme catalyses 7-phospho-2-dehydro-3-deoxy-D-arabino-heptonate = 3-dehydroquinate + phosphate. The protein operates within metabolic intermediate biosynthesis; chorismate biosynthesis; chorismate from D-erythrose 4-phosphate and phosphoenolpyruvate: step 2/7. In terms of biological role, catalyzes the conversion of 3-deoxy-D-arabino-heptulosonate 7-phosphate (DAHP) to dehydroquinate (DHQ). This chain is 3-dehydroquinate synthase, found in Rhodopseudomonas palustris (strain BisA53).